The chain runs to 101 residues: Small ribosomal subunit protein uS14 (101 aa).

This sequence belongs to the universal ribosomal protein uS14 family. In terms of assembly, part of the 30S ribosomal subunit. Contacts proteins S3 and S10.

In terms of biological role, binds 16S rRNA, required for the assembly of 30S particles and may also be responsible for determining the conformation of the 16S rRNA at the A site. The sequence is that of Small ribosomal subunit protein uS14 from Francisella philomiragia subsp. philomiragia (strain ATCC 25017 / CCUG 19701 / FSC 153 / O#319-036).